The sequence spans 428 residues: Mitochondrial import inner membrane translocase subunit TIM50-C (428 aa).

Residues 59–79 (LFTCTALPAAAPALFSILHTA) form a helical membrane-spanning segment. Topologically, residues 80-428 (RGYSSTTKQE…KQWSRNILGR (349 aa)) are mitochondrial intermembrane. The segment at 112–138 (FPQTSPEVDSNAEQERKKREEEEEKEN) is disordered. Over residues 124 to 138 (EQERKKREEEEEKEN) the composition is skewed to basic and acidic residues. The 144-residue stretch at 224 to 367 (YVQPRYTLVL…LDLIAFLKII (144 aa)) folds into the FCP1 homology domain.

This sequence belongs to the TIM50 family. As to quaternary structure, component of the TIM23 complex at least composed of Tim23, Tim17 (Tim17a1, Tim17a2 or Tim17b1) and a Tim50.

Its subcellular location is the mitochondrion inner membrane. In terms of biological role, essential component of the TIM23 complex, a complex that mediates the translocation of transit peptide-containing proteins across the mitochondrial inner membrane. This chain is Mitochondrial import inner membrane translocase subunit TIM50-C (ttm50), found in Drosophila melanogaster (Fruit fly).